The primary structure comprises 106 residues: UPF0235 protein OCAR_4310/OCA5_c02140 (106 aa).

The protein belongs to the UPF0235 family.

The sequence is that of UPF0235 protein OCAR_4310/OCA5_c02140 from Afipia carboxidovorans (strain ATCC 49405 / DSM 1227 / KCTC 32145 / OM5) (Oligotropha carboxidovorans).